Consider the following 175-residue polypeptide: Peptide deformylase (175 aa).

Residues C99 and H141 each coordinate Fe cation. E142 is a catalytic residue. H145 serves as a coordination point for Fe cation.

The protein belongs to the polypeptide deformylase family. Requires Fe(2+) as cofactor.

The enzyme catalyses N-terminal N-formyl-L-methionyl-[peptide] + H2O = N-terminal L-methionyl-[peptide] + formate. Functionally, removes the formyl group from the N-terminal Met of newly synthesized proteins. Requires at least a dipeptide for an efficient rate of reaction. N-terminal L-methionine is a prerequisite for activity but the enzyme has broad specificity at other positions. The polypeptide is Peptide deformylase (Rickettsia prowazekii (strain Madrid E)).